Reading from the N-terminus, the 398-residue chain is Serine/threonine-protein kinase UL13 (398 aa).

The segment covering 1–10 (MAAGGGGGGV) has biased composition (gly residues). A disordered region spans residues 1 to 44 (MAAGGGGGGVSRAALARPPIHRGTSAPGGAIAAAGGDGDGDEAS). The Protein kinase domain maps to 80-398 (TGDPVAVGAG…GGARFAELAA (319 aa)). ATP-binding positions include 86–94 (VGAGSYGSV) and Lys103. Residue Asp194 is the Proton acceptor of the active site.

This sequence belongs to the protein kinase superfamily. Ser/Thr protein kinase family. Autophosphorylated.

It is found in the virion tegument. The protein resides in the host nucleus. Its subcellular location is the host cytoplasm. It localises to the host endoplasmic reticulum. It catalyses the reaction L-seryl-[protein] + ATP = O-phospho-L-seryl-[protein] + ADP + H(+). The catalysed reaction is L-threonyl-[protein] + ATP = O-phospho-L-threonyl-[protein] + ADP + H(+). Multifunctional serine/threonine kinase that plays a role in several processes including egress of virus particles from the nucleus, modulation of the actin cytoskeleton and regulation of viral and cellular gene expression. Regulates the nuclear localization of viral envelopment factors UL34 and UL31, by phosphorylating the US3 kinase, indicating a role in nuclear egress. Disrupts host nuclear lamins, including LMNA and LMNB1. Phosphorylates the viral Fc receptor composed of glycoproteins E (gE) and I (gI). Phosphorylation of glycoprotein E (gE) by UL13 alters its subcellular localization, from the host early endosome to the plasma membrane. Participates in the transcriptional regulation of cellular and viral mRNAs mainly by phosphorylating the viral transcriptional regulator ICP22. Functions as an antagonist of the host RLR-mediated antiviral responses via suppression of the transcription of cytosolic receptors RIGI and IFIH1. Facilitates immune evasion also by recruiting host RNF5 to initiate the 'Lys-27'-/'Lys-29'-linked polyubiquitination of STING1; leading to its degradation. Blocks host IFN-beta transactivation mediated by the cGAS-STING pathway by phosphorylating host IRF3. In turn, IRF3 binding to the IRF3-responsive promoters and downstream interferon stimulated genes/ISG expression are greatly impaired. Induces the activation of the host DNA damage response via H2AX phosphorylation to improve efficient viral replication and progeny production. The sequence is that of Serine/threonine-protein kinase UL13 (UL13) from Suid herpesvirus 1 (strain NIA-3) (SuHV-1).